A 425-amino-acid polypeptide reads, in one-letter code: Gamma-glutamyl phosphate reductase (425 aa).

The protein belongs to the gamma-glutamyl phosphate reductase family.

It localises to the cytoplasm. The enzyme catalyses L-glutamate 5-semialdehyde + phosphate + NADP(+) = L-glutamyl 5-phosphate + NADPH + H(+). Its pathway is amino-acid biosynthesis; L-proline biosynthesis; L-glutamate 5-semialdehyde from L-glutamate: step 2/2. Its function is as follows. Catalyzes the NADPH-dependent reduction of L-glutamate 5-phosphate into L-glutamate 5-semialdehyde and phosphate. The product spontaneously undergoes cyclization to form 1-pyrroline-5-carboxylate. The chain is Gamma-glutamyl phosphate reductase from Novosphingobium aromaticivorans (strain ATCC 700278 / DSM 12444 / CCUG 56034 / CIP 105152 / NBRC 16084 / F199).